We begin with the raw amino-acid sequence, 474 residues long: Probable glycine dehydrogenase (decarboxylating) subunit 2 (474 aa).

Lys262 is modified (N6-(pyridoxal phosphate)lysine).

Belongs to the GcvP family. C-terminal subunit subfamily. As to quaternary structure, the glycine cleavage system is composed of four proteins: P, T, L and H. In this organism, the P 'protein' is a heterodimer of two subunits. Requires pyridoxal 5'-phosphate as cofactor.

It carries out the reaction N(6)-[(R)-lipoyl]-L-lysyl-[glycine-cleavage complex H protein] + glycine + H(+) = N(6)-[(R)-S(8)-aminomethyldihydrolipoyl]-L-lysyl-[glycine-cleavage complex H protein] + CO2. Its function is as follows. The glycine cleavage system catalyzes the degradation of glycine. The P protein binds the alpha-amino group of glycine through its pyridoxal phosphate cofactor; CO(2) is released and the remaining methylamine moiety is then transferred to the lipoamide cofactor of the H protein. The sequence is that of Probable glycine dehydrogenase (decarboxylating) subunit 2 from Thermotoga maritima (strain ATCC 43589 / DSM 3109 / JCM 10099 / NBRC 100826 / MSB8).